The following is a 226-amino-acid chain: tRNA (guanine-N(1)-)-methyltransferase (226 aa).

Residues G110 and 129–134 (IGDYIL) contribute to the S-adenosyl-L-methionine site.

The protein belongs to the RNA methyltransferase TrmD family. Homodimer.

It is found in the cytoplasm. It carries out the reaction guanosine(37) in tRNA + S-adenosyl-L-methionine = N(1)-methylguanosine(37) in tRNA + S-adenosyl-L-homocysteine + H(+). In terms of biological role, specifically methylates guanosine-37 in various tRNAs. The sequence is that of tRNA (guanine-N(1)-)-methyltransferase from Malacoplasma penetrans (strain HF-2) (Mycoplasma penetrans).